The primary structure comprises 112 residues: Photosystem II reaction center Psb28 protein (112 aa).

It belongs to the Psb28 family. As to quaternary structure, part of the photosystem II complex.

The protein resides in the cellular thylakoid membrane. The polypeptide is Photosystem II reaction center Psb28 protein (Microcystis aeruginosa (strain NIES-843 / IAM M-2473)).